Reading from the N-terminus, the 506-residue chain is Bifunctional purine biosynthesis protein PurH (506 aa).

The 146-residue stretch at 1-146 (MARLALLSVS…KNFAHLTVLC (146 aa)) folds into the MGS-like domain.

The protein belongs to the PurH family.

It carries out the reaction (6R)-10-formyltetrahydrofolate + 5-amino-1-(5-phospho-beta-D-ribosyl)imidazole-4-carboxamide = 5-formamido-1-(5-phospho-D-ribosyl)imidazole-4-carboxamide + (6S)-5,6,7,8-tetrahydrofolate. It catalyses the reaction IMP + H2O = 5-formamido-1-(5-phospho-D-ribosyl)imidazole-4-carboxamide. It functions in the pathway purine metabolism; IMP biosynthesis via de novo pathway; 5-formamido-1-(5-phospho-D-ribosyl)imidazole-4-carboxamide from 5-amino-1-(5-phospho-D-ribosyl)imidazole-4-carboxamide (10-formyl THF route): step 1/1. The protein operates within purine metabolism; IMP biosynthesis via de novo pathway; IMP from 5-formamido-1-(5-phospho-D-ribosyl)imidazole-4-carboxamide: step 1/1. In Trichormus variabilis (strain ATCC 29413 / PCC 7937) (Anabaena variabilis), this protein is Bifunctional purine biosynthesis protein PurH.